Here is a 714-residue protein sequence, read N- to C-terminus: Choline transporter-like protein 5 (714 aa).

The Cytoplasmic portion of the chain corresponds to 1–33 (MGRRSAAPTSPFGEPRKFDPKFKGPIGKRHCTD). Residues 34–54 (VLCCIIFVVVILGYIALGVVA) form a helical membrane-spanning segment. Over 55–237 (WIHGDPRKII…KIFEDYASSW (183 aa)) the chain is Extracellular. N-linked (GlcNAc...) asparagine glycosylation is found at asparagine 83, asparagine 132, asparagine 192, and asparagine 205. A helical transmembrane segment spans residues 238–258 (YWILIALFIAMVVSLLFLILL). At 259-261 (RFT) the chain is on the cytoplasmic side. A helical membrane pass occupies residues 262-282 (AGVFFWIFIIGVIGVVGYGIW). The Extracellular segment spans residues 283–320 (HCFWEYDSLKGVPGADLTIYDIGLQTDFRVYLQLRQTW). A helical membrane pass occupies residues 321–341 (LAFMILLCIVEVIIILMLIFL). The Cytoplasmic segment spans residues 342–346 (RNRIR). The chain crosses the membrane as a helical span at residues 347-367 (IAIALLQEGSRAIGYIMSTLF). At 368–369 (YP) the chain is on the extracellular side. Residues 370-390 (IITFILIAICISYWAVTAVFM) traverse the membrane as a helical segment. The Cytoplasmic portion of the chain corresponds to 391–455 (ATSGEPIYKV…QYILIFQLCN (65 aa)). A helical transmembrane segment spans residues 456-476 (VFVFLWLVNFSIALGQCTLAG). Over 477–510 (AFASYYWAFKKPADIPACPLFSSFGRAIRYHTGS) the chain is Extracellular. Residues 511 to 531 (LALGSLILALVQFIRIILEYL) traverse the membrane as a helical segment. Topologically, residues 532–605 (DHKLKASQNS…RVAVLDKVTD (74 aa)) are cytoplasmic. Residues 606-626 (FLLFLGKVFVTGSVGVLAFFF) traverse the membrane as a helical segment. Over 627-644 (FTRKIPVLTDEAPALNYY) the chain is Extracellular. The chain crosses the membrane as a helical span at residues 645-665 (WVPLLTVLIGSYLIAHGFFSV). Over 666-711 (YAMCVDTLFLCFCEDLERNNGSSSKPYYMSPNLHRILGKKEILSKK) the chain is Cytoplasmic.

The protein belongs to the CTL (choline transporter-like) family.

The protein resides in the cell membrane. The catalysed reaction is choline(out) + n H(+)(in) = choline(in) + n H(+)(out). Choline/H+ antiporter. This is Choline transporter-like protein 5 (slc44a5) from Xenopus tropicalis (Western clawed frog).